We begin with the raw amino-acid sequence, 77 residues long: DNA-directed RNA polymerase subunit Rpo5 (77 aa).

This sequence belongs to the archaeal Rpo5/eukaryotic RPB5 RNA polymerase subunit family. In terms of assembly, part of the RNA polymerase complex.

It localises to the cytoplasm. It catalyses the reaction RNA(n) + a ribonucleoside 5'-triphosphate = RNA(n+1) + diphosphate. In terms of biological role, DNA-dependent RNA polymerase (RNAP) catalyzes the transcription of DNA into RNA using the four ribonucleoside triphosphates as substrates. This chain is DNA-directed RNA polymerase subunit Rpo5, found in Methanothermobacter thermautotrophicus (strain ATCC 29096 / DSM 1053 / JCM 10044 / NBRC 100330 / Delta H) (Methanobacterium thermoautotrophicum).